The following is a 297-amino-acid chain: HTH-type transcriptional regulator ArgP (297 aa).

Positions 4-60 (PDYRTLQALDAVIRERGFERAAQKLCITQSAVSQRIKQLENMFGQPLLVRTVPPRPT) constitute an HTH lysR-type domain. Positions 21 to 40 (FERAAQKLCITQSAVSQRIK) form a DNA-binding region, H-T-H motif.

Belongs to the LysR transcriptional regulatory family. In terms of assembly, homodimer.

In terms of biological role, controls the transcription of genes involved in arginine and lysine metabolism. The chain is HTH-type transcriptional regulator ArgP from Escherichia fergusonii (strain ATCC 35469 / DSM 13698 / CCUG 18766 / IAM 14443 / JCM 21226 / LMG 7866 / NBRC 102419 / NCTC 12128 / CDC 0568-73).